The following is a 235-amino-acid chain: Aspartate/glutamate leucyltransferase (235 aa).

It belongs to the R-transferase family. Bpt subfamily.

It localises to the cytoplasm. The enzyme catalyses N-terminal L-glutamyl-[protein] + L-leucyl-tRNA(Leu) = N-terminal L-leucyl-L-glutamyl-[protein] + tRNA(Leu) + H(+). The catalysed reaction is N-terminal L-aspartyl-[protein] + L-leucyl-tRNA(Leu) = N-terminal L-leucyl-L-aspartyl-[protein] + tRNA(Leu) + H(+). Functions in the N-end rule pathway of protein degradation where it conjugates Leu from its aminoacyl-tRNA to the N-termini of proteins containing an N-terminal aspartate or glutamate. This is Aspartate/glutamate leucyltransferase from Pseudomonas syringae pv. tomato (strain ATCC BAA-871 / DC3000).